The chain runs to 313 residues: Ribonuclease HIII (313 aa).

One can recognise an RNase H type-2 domain in the interval 98-313 (YNCIGSDEAG…REKALKLIKK (216 aa)). Asp104, Glu105, and Asp208 together coordinate a divalent metal cation.

Belongs to the RNase HII family. RnhC subfamily. The cofactor is Mn(2+). It depends on Mg(2+) as a cofactor.

The protein localises to the cytoplasm. The enzyme catalyses Endonucleolytic cleavage to 5'-phosphomonoester.. Its function is as follows. Endonuclease that specifically degrades the RNA of RNA-DNA hybrids. In Macrococcus caseolyticus (strain JCSC5402) (Macrococcoides caseolyticum), this protein is Ribonuclease HIII.